The following is a 408-amino-acid chain: Broad specificity amino-acid racemase (408 aa).

A signal peptide spans 1 to 21; it reads MHKKTLLATLILGLLAGQAVA. A disulfide bridge links C70 with C96. K74 serves as the catalytic Proton acceptor. N6-(pyridoxal phosphate)lysine is present on K74. R173 is a binding site for substrate. Y300 (proton acceptor) is an active-site residue. M348 is a binding site for substrate.

Belongs to the alanine racemase family. Bsr subfamily. Homodimer. Pyridoxal 5'-phosphate is required as a cofactor.

The protein resides in the periplasm. The enzyme catalyses an L-alpha-amino acid = a D-alpha-amino acid. The catalysed reaction is L-lysine = D-lysine. It catalyses the reaction L-arginine = D-arginine. It carries out the reaction L-alanine = D-alanine. The enzyme catalyses L-serine = D-serine. The catalysed reaction is L-methionine = D-methionine. It catalyses the reaction L-leucine = D-leucine. It carries out the reaction L-cysteine = D-cysteine. The enzyme catalyses L-glutamine = D-glutamine. The catalysed reaction is L-asparagine = D-asparagine. It catalyses the reaction L-histidine = D-histidine. In terms of biological role, amino-acid racemase able to utilize a broad range of substrates. Reversibly racemizes ten of the 19 natural chiral amino acids known, including both non-beta-branched aliphatic amino acids (Ala, Leu, Met, Ser, Cys, Gln and Asn) and positively charged amino acids (His, Lys and Arg). Is not active on negatively charged (Glu and Asp) or aromatic (Tyr, Trp and Phe) amino acids and displays minimal activity towards beta-branched aliphatic (Ile, Val and Thr) substrates. Enables bacteria to produce and release extracellular non-canonical D-amino acids (NCDAAs) that regulate diverse cellular processes. The protein is Broad specificity amino-acid racemase of Aeromonas hydrophila subsp. hydrophila (strain ATCC 7966 / DSM 30187 / BCRC 13018 / CCUG 14551 / JCM 1027 / KCTC 2358 / NCIMB 9240 / NCTC 8049).